Here is a 718-residue protein sequence, read N- to C-terminus: Pentatricopeptide repeat-containing protein At1g22960, mitochondrial (718 aa).

Residues 1-11 (MILCLRLCLRA) constitute a mitochondrion transit peptide. PPR repeat units follow at residues 167–201 (ALKL…GFLP), 202–236 (SVRN…GIMP), 237–271 (TVIT…NIEF), 272–306 (SEVT…GFAV), 307–341 (TPYS…GIYP), 342–372 (TTST…MAAP), 373–407 (DVVS…DIHP), 408–442 (SIVT…LIFP), 443–477 (DVIT…GIKP), 478–512 (DGYA…DHHA), 514–548 (DLTI…GLVP), 549–583 (DHVT…RLYP), 584–618 (SVIT…GVRP), 619–653 (NVMT…GIPP), and 654–688 (NKYS…EIEP).

The protein belongs to the PPR family. P subfamily.

The protein localises to the mitochondrion. The sequence is that of Pentatricopeptide repeat-containing protein At1g22960, mitochondrial from Arabidopsis thaliana (Mouse-ear cress).